Here is a 93-residue protein sequence, read N- to C-terminus: Small ribosomal subunit protein uS19 (93 aa).

The protein belongs to the universal ribosomal protein uS19 family.

In terms of biological role, protein S19 forms a complex with S13 that binds strongly to the 16S ribosomal RNA. The polypeptide is Small ribosomal subunit protein uS19 (Mycobacterium sp. (strain JLS)).